The primary structure comprises 187 residues: Ribosome-recycling factor (187 aa).

Belongs to the RRF family.

The protein resides in the cytoplasm. Responsible for the release of ribosomes from messenger RNA at the termination of protein biosynthesis. May increase the efficiency of translation by recycling ribosomes from one round of translation to another. The polypeptide is Ribosome-recycling factor (Orientia tsutsugamushi (strain Boryong) (Rickettsia tsutsugamushi)).